The primary structure comprises 553 residues: MRVLSTTLLIGAAAAAVSPPQQVLQAPEEAVENTHKSSPSLAESLSQPLRELKEELKLLTNEVEEVWEEVSNIFPGALDNIFFSSAKKHTRRPDSHWDHIIRGSDVQNIWVENENGEKEREVGGRLEAFDLRVKAVDPSSLGIDPDVKQYSGYLDDNENDKHLFYWFFESRNDPKTDPVVLWLNGGPGCSSLTGLFFELGPSSIGKNIKPIYNPYSWNSNTSVIFLDQPVNVGFSYSGNSVSETSAAAKDVYALLTLFFKQFPEYSSQDFHIAGESYAGHYIPSFASEILSHKKRNINLKSVLIGNGLTDGLTQYEYYRPMACGDGGYPAVLDETTCRSMDNALGRCQSMIQSCYDSESAWTCVPASIYCNNALLGPYQRTGQNVYDVRKPCEDSSLCYADLEYVSTYLNQAEVMKALGAEVDSFDSCNFDINRNFLFKGDWMKPFHKLVPGLLEEIPVLIYAGDADFICNWLGNKAWTDALEWAGHEEYAATELEDLEIVDNKHKGKKIGQVKSSGNLTFMRLFGGGHMVPYDQPEASLEFFNRWIGGEWTK.

The N-terminal stretch at 1–17 (MRVLSTTLLIGAAAAAV) is a signal peptide. Residues 18-134 (SPPQQVLQAP…RLEAFDLRVK (117 aa)) constitute a propeptide that is removed on maturation. 5 disulfide bridges follow: C189–C428, C323–C337, C347–C370, C354–C363, and C392–C398. N-linked (GlcNAc...) asparagine glycosylation occurs at N220. S276 is a catalytic residue. The active site involves D467. A glycan (N-linked (GlcNAc...) asparagine) is linked at N518. Residue H529 is part of the active site.

Belongs to the peptidase S10 family.

It localises to the vacuole. The catalysed reaction is Release of a C-terminal amino acid with broad specificity.. Vacuolar carboxypeptidase involved in degradation of small peptides. Digests preferentially peptides containing an aliphatic or hydrophobic residue in P1' position, as well as methionine, leucine or phenylalanine in P1 position of ester substrate. The polypeptide is Carboxypeptidase Y homolog A (cpyA) (Talaromyces stipitatus (strain ATCC 10500 / CBS 375.48 / QM 6759 / NRRL 1006) (Penicillium stipitatum)).